Reading from the N-terminus, the 154-residue chain is Protein X (154 aa).

Positions 68-117 (PCALRFTSARRMETTVNAHQILPKVLHKRTLGLSAMSTTDLEAYFKACLF) are mitochondrial targeting sequence.

It belongs to the orthohepadnavirus protein X family. In terms of assembly, may form homodimer. May interact with host CEBPA, CFLAR, CREB1, DDB1, E4F1, HBXIP, HSPD1/HSP60, NFKBIA, POLR2E and SMAD4. Interacts with host SMC5-SMC6 complex and induces its degradation. Interacts with host TRPC4AP; leading to prevent ubiquitination of TRPC4AP. Interacts with host PLSCR1; this interaction promotes ubiquitination and degradation of HBx and impairs HBx-mediated cell proliferation. A fraction may be phosphorylated in insect cells and HepG2 cells, a human hepatoblastoma cell line. Phosphorylated in vitro by host protein kinase C or mitogen-activated protein kinase. N-acetylated in insect cells.

Its subcellular location is the host cytoplasm. The protein resides in the host nucleus. It is found in the host mitochondrion. Its function is as follows. Multifunctional protein that plays a role in silencing host antiviral defenses and promoting viral transcription. Does not seem to be essential for HBV infection. May be directly involved in development of cirrhosis and liver cancer (hepatocellular carcinoma). Most of cytosolic activities involve modulation of cytosolic calcium. The effect on apoptosis is controversial depending on the cell types in which the studies have been conducted. May induce apoptosis by localizing in mitochondria and causing loss of mitochondrial membrane potential. May also modulate apoptosis by binding host CFLAR, a key regulator of the death-inducing signaling complex (DISC). Promotes viral transcription by using the host E3 ubiquitin ligase DDB1 to target the SMC5-SMC6 complex to proteasomal degradation. This host complex would otherwise bind to viral episomal DNA, and prevents its transcription. Moderately stimulates transcription of many different viral and cellular transcription elements. Promoters and enhancers stimulated by HBx contain DNA binding sites for NF-kappa-B, AP-1, AP-2, c-EBP, ATF/CREB, or the calcium-activated factor NF-AT. The polypeptide is Protein X (Hepatitis B virus genotype E (isolate Cote d'Ivoire/ABI-129/2003) (HBV-E)).